We begin with the raw amino-acid sequence, 184 residues long: MPLVRYRKVAILGYRSVGKTSLAHQFVEGEFLEGYDPTVENTYSKTVTLGKDEFHLHLVDTAGQDEYSILPYSLIIGVHGYVLVYSVNSLRSFQIVKNLYQKLHEGHGKTRLSVLLVGNKADLSPEREVQAVEGKKLAESWGAMFMESSARDNQLTQDVFIKVIQEIARVENSYGRQDRRCYLM.

Residues 16–21 (SVGKTS), 32–38 (LEGYDPT), G63, 119–122 (NKAD), and 149–150 (SA) contribute to the GTP site. The Effector region signature appears at 35–43 (YDPTVENTY). Mg(2+) is bound at residue T38. Residue C181 is modified to Cysteine methyl ester. The S-farnesyl cysteine moiety is linked to residue C181. Residues 182–184 (YLM) constitute a propeptide, removed in mature form.

The protein belongs to the small GTPase superfamily. Rheb family. As to quaternary structure, interacts with MTOR.

The protein resides in the endomembrane system. It localises to the cytoplasm. It carries out the reaction GTP + H2O = GDP + phosphate + H(+). In terms of biological role, binds GTP and exhibits intrinsic GTPase activity. May activate NF-kappa-B-mediated gene transcription. Promotes signal transduction through MTOR, activates RPS6KB1, and is a downstream target of the small GTPase-activating proteins TSC1 and TSC2. This chain is GTPase RhebL1 (Rhebl1), found in Mus musculus (Mouse).